The following is a 238-amino-acid chain: MMKQARSLLSRSLCDQSKSLFEASTLRGFASWSNSSTPGRGFPGKDAAKPSGRLFAPYSIFKGKAALSVEPVLPSFTEIDSGNLRIDRRGSLMMTFMPAIGERKYDWEKKQKFALSPTEVGSLISMGSKDSSEFFHDPSMKSSNAGQVRKSLSVKPHADGSGYFISLSVNNSILKTNDYFVVPVTKAEFAVMKTAFSFALPHIMGWNRLTGHVNTEALPSRNVSHLKTEPQLELEWDK.

Residues 1 to 29 (MMKQARSLLSRSLCDQSKSLFEASTLRGF) constitute a mitochondrion transit peptide. The segment at 62 to 67 (KGKAAL) is required for ssDNA binding.

Belongs to the Whirly family. In terms of assembly, homotetramer.

The protein resides in the mitochondrion. Single-stranded DNA-binding protein that associates with mitochondrial DNA and may play a role in the regulation of the gene expression machinery. Also seems to be required to prevent break-induced DNA rearrangements in the mitochondrial genome. Can bind to melt double-stranded DNA in vivo. This is Single-stranded DNA-binding protein WHY2, mitochondrial (WHY2) from Arabidopsis thaliana (Mouse-ear cress).